The following is a 106-amino-acid chain: Replication restart protein PriB (106 aa).

An SSB domain is found at 4-103 (TNRLVLSGTV…LHAEQIEFID (100 aa)).

Belongs to the PriB family. In terms of assembly, homodimer. Interacts with PriA and DnaT. Component of the replication restart primosome. Primosome assembly occurs via a 'hand-off' mechanism. PriA binds to replication forks, subsequently PriB then DnaT bind; DnaT then displaces ssDNA to generate the helicase loading substrate.

Functionally, involved in the restart of stalled replication forks, which reloads the replicative helicase on sites other than the origin of replication; the PriA-PriB pathway is the major replication restart pathway. During primosome assembly it facilitates complex formation between PriA and DnaT on DNA; stabilizes PriA on DNA. Stimulates the DNA unwinding activity of PriA helicase. The polypeptide is Replication restart protein PriB (Yersinia enterocolitica serotype O:8 / biotype 1B (strain NCTC 13174 / 8081)).